A 174-amino-acid polypeptide reads, in one-letter code: MNYFNLFNFTPSFDIDTGLLAERYRELQKAVHPDKFANDSEQQKLLAVQRTAQVNDGYHTLKQPLRRAEHLLSLGGVDLSHETTTIKDTVFLMQQMDWREALEDIKHSKQPQEQIDELYDSFSAHEKLLFSQLSHLLQTQDEVAYLKAADQVRKLKFMAKLQQELTNIEDALLD.

Residues 2 to 74 (NYFNLFNFTP…LRRAEHLLSL (73 aa)) form the J domain.

The protein belongs to the HscB family. Interacts with HscA and stimulates its ATPase activity.

Its function is as follows. Co-chaperone involved in the maturation of iron-sulfur cluster-containing proteins. Seems to help targeting proteins to be folded toward HscA. This chain is Co-chaperone protein HscB homolog, found in Shewanella denitrificans (strain OS217 / ATCC BAA-1090 / DSM 15013).